Reading from the N-terminus, the 622-residue chain is Probable Xaa-Pro aminopeptidase P (622 aa).

The Mn(2+) site is built by Asp-419, Asp-430, Glu-528, and Glu-542.

This sequence belongs to the peptidase M24B family. Requires Mn(2+) as cofactor.

The catalysed reaction is Release of any N-terminal amino acid, including proline, that is linked to proline, even from a dipeptide or tripeptide.. Its function is as follows. Catalyzes the removal of a penultimate prolyl residue from the N-termini of peptides. This chain is Probable Xaa-Pro aminopeptidase P (AMPP), found in Coprinopsis cinerea (strain Okayama-7 / 130 / ATCC MYA-4618 / FGSC 9003) (Inky cap fungus).